Here is a 300-residue protein sequence, read N- to C-terminus: MQFHSSSALITPFKKDLSVDEAAYETLIKRQIFQGMDACVPVGTTGESATLTHKEHMRCIEIAIETCKSTKTPSNSRMKVLAGVGSNATSESLSLAKFAQKIGADAILCVSPYYNRPTQQGLFEHYKTIAQSVEIPVMLYDVPSRTGVSIEVPTALKLFREVPNIKAIKEASGSLKRVTELHYYEKDFKIFSGEDSLNHSIMFSGGCGVISVTGNLMPNLISQMVNCALKFEYQQALEIQNKLFDLHQALFVETNPIPIKMAMHLAGLIENPSYRLPLVAPSKETIKLLEKTLQQYEVIA.

A pyruvate-binding site is contributed by Thr45. The active-site Proton donor/acceptor is Tyr140. The Schiff-base intermediate with substrate role is filled by Lys169. Ile210 lines the pyruvate pocket.

It belongs to the DapA family. Homotetramer; dimer of dimers.

It is found in the cytoplasm. It catalyses the reaction L-aspartate 4-semialdehyde + pyruvate = (2S,4S)-4-hydroxy-2,3,4,5-tetrahydrodipicolinate + H2O + H(+). The protein operates within amino-acid biosynthesis; L-lysine biosynthesis via DAP pathway; (S)-tetrahydrodipicolinate from L-aspartate: step 3/4. Its function is as follows. Catalyzes the condensation of (S)-aspartate-beta-semialdehyde [(S)-ASA] and pyruvate to 4-hydroxy-tetrahydrodipicolinate (HTPA). In Helicobacter pylori (strain J99 / ATCC 700824) (Campylobacter pylori J99), this protein is 4-hydroxy-tetrahydrodipicolinate synthase.